The following is a 311-amino-acid chain: Protoheme IX farnesyltransferase (311 aa).

The next 9 membrane-spanning stretches (helical) occupy residues 32 to 52 (VMSL…VVVD), 53 to 73 (PLYG…AGAL), 98 to 118 (ISRG…VFLM), 120 to 140 (VLIN…YIVI), 153 to 173 (IVIG…AATG), 180 to 200 (FLLF…LCLF), 226 to 246 (ILVY…TGYA), 248 to 268 (IIYG…AYRL), and 285 to 305 (FFFS…EFLI).

Belongs to the UbiA prenyltransferase family. Protoheme IX farnesyltransferase subfamily.

The protein localises to the cell inner membrane. The catalysed reaction is heme b + (2E,6E)-farnesyl diphosphate + H2O = Fe(II)-heme o + diphosphate. The protein operates within porphyrin-containing compound metabolism; heme O biosynthesis; heme O from protoheme: step 1/1. Functionally, converts heme B (protoheme IX) to heme O by substitution of the vinyl group on carbon 2 of heme B porphyrin ring with a hydroxyethyl farnesyl side group. This chain is Protoheme IX farnesyltransferase, found in Bartonella bacilliformis (strain ATCC 35685 / KC583 / Herrer 020/F12,63).